An 892-amino-acid polypeptide reads, in one-letter code: Dipeptidyl peptidase 8 (892 aa).

Catalysis depends on charge relay system residues Ser749, Asp827, and His859.

The protein belongs to the peptidase S9B family. DPPIV subfamily. Homodimer. Forms a ternary complex with NLRP1, composed of a DPP8 homodimer, one full-length NLRP1 protein, and one cleaved C-terminus of NLRP1 (NACHT, LRR and PYD domains-containing protein 1, C-terminus). Forms a ternary complex with CARD8, composed of a DPP8 homodimer, one full-length NLRP1 protein, and one cleaved C-terminus of CARD8 (Caspase recruitment domain-containing protein 8, C-terminus). In the ternary complex, only one subunit of the DPP8 homodimer is bound to NLRP1 or CARD8.

It localises to the cytoplasm. The catalysed reaction is Release of an N-terminal dipeptide, Xaa-Yaa-|-Zaa-, from a polypeptide, preferentially when Yaa is Pro, provided Zaa is neither Pro nor hydroxyproline.. Its activity is regulated as follows. Inhibited by zinc. Inhibited by the serine proteinase inhibitor 4-(2-aminoethyl)benzenesulphonyl fluoride (AEBSF), and by di-isopropylfluorophosphate. Specifically inhibited by isoindoline derivatives. Inhibited by Val-boroPro (Talabostat, PT-100), a non-selective inhibitor, which triggers pyroptosis in monocytes and macrophages. Its function is as follows. Dipeptidyl peptidase that cleaves off N-terminal dipeptides from proteins having a Pro or Ala residue at position 2. Acts as a key inhibitor of caspase-1-dependent monocyte and macrophage pyroptosis in resting cells by preventing activation of NLRP1 and CARD8. Sequesters the cleaved C-terminal part of NLRP1 and CARD8, which respectively constitute the active part of the NLRP1 and CARD8 inflammasomes, in a ternary complex, thereby preventing their oligomerization and activation. The dipeptidyl peptidase activity is required to suppress NLRP1 and CARD8; however, neither NLRP1 nor CARD8 are bona fide substrates of DPP8, suggesting the existence of substrate(s) required for NLRP1 and CARD8 inhibition. This Mus musculus (Mouse) protein is Dipeptidyl peptidase 8.